The sequence spans 221 residues: Thymine/uracil-DNA glycosylase (221 aa).

The 29-residue stretch at 105–133 (DYGGRVPRNRKAILDLPGVGKYTCAAVMC) folds into the HhH domain. 4 residues coordinate [4Fe-4S] cluster: C197, C204, C207, and C213.

It belongs to the Nth/MutY family. The cofactor is [4Fe-4S] cluster.

The enzyme catalyses Hydrolyzes mismatched double-stranded DNA and polynucleotides, releasing free thymine.. DNA glycosylase that excises thymine from T/G mismatches and uracil from U/G mismatches. Acts as a repair enzyme able to counteract the mutagenic effect of spontaneous hydrolytic deamination of DNA 5-methylcytosine (5-meC) residues that leads to the formation of T/G mismatches. May also repair U/G mismatches arising from hydrolytic deamination of DNA cytosine residues. G/G, A/G, T/C and U/C are minor substrates. This Methanothermobacter thermautotrophicus (Methanobacterium thermoformicicum) protein is Thymine/uracil-DNA glycosylase.